A 184-amino-acid polypeptide reads, in one-letter code: MRVISGSKKGRSLKAVAGTSTRPTTDKVKESIFNMIGPYFDGGRGLDLFAGSGGLGIEALSRGFEHCIFVDRDFKAIQTVKSNLKTLELTKHAQVYRNDAERALHAAAKRETGFRGIFLDPPYKEQKLKALLTLIDEYQMLEEDGFIVAEHDREVELPETVGDLVMTRKETYGLTGVAIYKKRG.

The tract at residues 1 to 22 is disordered; sequence MRVISGSKKGRSLKAVAGTSTR.

Belongs to the methyltransferase superfamily. RsmD family.

Its function is as follows. May catalyze the S-adenosyl-L-methionine-dependent methylation of a specific base in rRNA. The sequence is that of Putative rRNA methyltransferase YlbH (ylbH) from Bacillus subtilis (strain 168).